A 109-amino-acid polypeptide reads, in one-letter code: Elicitor peptide 2 (109 aa).

The propeptide occupies 1-73; sequence MEKLDKRREE…KDDDVVVLLR (73 aa). Basic and acidic residues predominate over residues 74-88; that stretch reads DNKAKSKKRDKEKPS. The segment at 74–109 is disordered; sequence DNKAKSKKRDKEKPSSGRPGQTNSVPNAAIQVYKED.

This sequence belongs to the brassicaceae elicitor peptide family.

Its function is as follows. Elicitor of plant defense. The sequence is that of Elicitor peptide 2 (PEP2) from Arabidopsis thaliana (Mouse-ear cress).